Reading from the N-terminus, the 141-residue chain is Hemoglobin subunit alpha (141 aa).

A Globin domain is found at 1–141; the sequence is VLSANDKANV…VSTVLTSKYR (141 aa). Ser3 is modified (phosphoserine). Lys7 and Lys11 each carry N6-succinyllysine. Residue Lys16 is modified to N6-acetyllysine; alternate. Lys16 bears the N6-succinyllysine; alternate mark. At Tyr24 the chain carries Phosphotyrosine. Position 35 is a phosphoserine (Ser35). Residue Lys40 is modified to N6-succinyllysine. Ser49 carries the post-translational modification Phosphoserine. His58 is a binding site for O2. His87 provides a ligand contact to heme b. Ser102 bears the Phosphoserine mark. Position 108 is a phosphothreonine (Thr108). Phosphoserine occurs at positions 124 and 131. Phosphothreonine occurs at positions 134 and 137. At Ser138 the chain carries Phosphoserine.

This sequence belongs to the globin family. As to quaternary structure, heterotetramer of two alpha chains and two beta chains. In terms of tissue distribution, red blood cells.

In terms of biological role, involved in oxygen transport from the lung to the various peripheral tissues. Hemopressin acts as an antagonist peptide of the cannabinoid receptor CNR1. Hemopressin-binding efficiently blocks cannabinoid receptor CNR1 and subsequent signaling. In Suncus murinus (Asian house shrew), this protein is Hemoglobin subunit alpha (HBA).